We begin with the raw amino-acid sequence, 116 residues long: Large ribosomal subunit protein bL17 (116 aa).

This sequence belongs to the bacterial ribosomal protein bL17 family. In terms of assembly, part of the 50S ribosomal subunit. Contacts protein L32.

The sequence is that of Large ribosomal subunit protein bL17 from Sulfurovum sp. (strain NBC37-1).